Reading from the N-terminus, the 166-residue chain is Large ribosomal subunit protein bL19 (166 aa).

It belongs to the bacterial ribosomal protein bL19 family. Part of the 50S ribosomal subunit. Forms a cluster with proteins L3 and L14.

Its function is as follows. This protein is located at the 30S-50S ribosomal subunit interface and may play a role in the structure and function of the aminoacyl-tRNA binding site. Binds the 23S rRNA. The chain is Large ribosomal subunit protein bL19 (rplS) from Deinococcus radiodurans (strain ATCC 13939 / DSM 20539 / JCM 16871 / CCUG 27074 / LMG 4051 / NBRC 15346 / NCIMB 9279 / VKM B-1422 / R1).